A 959-amino-acid polypeptide reads, in one-letter code: E3 ubiquitin-protein ligase arkadia-B (959 aa).

Polar residues predominate over residues 51-66 (CSDTNKQQSDLNSNGT). Disordered stretches follow at residues 51-171 (CSDT…VSSL), 189-212 (RKRFVKNVSSQRTQKQKERMMLQR), and 225-271 (LLPS…SGGM). The span at 112 to 131 (SSFSDCISSPSSSSHFGDSD) shows a compositional bias: low complexity. A compositionally biased stretch (polar residues) spans 142–156 (PLSSVNSTPRTQSAR). A compositionally biased stretch (low complexity) spans 228–246 (SSSSSSENDLSSESSSSSS). Polar residues predominate over residues 256-267 (TGENRQDGTTLP). The SUMO interaction motif 1 (SIM) signature appears at 275–279 (VVVIE). The short motif at 300-306 (EVEIVTV) is the SUMO interaction motif 2 (SIM) element. A disordered region spans residues 318–341 (HPRSHWGQNSQSGRTQEQRTRNRV). Residues 323–332 (WGQNSQSGRT) are compositionally biased toward polar residues. The SUMO interaction motif 3 (SIM) motif lies at 355–359 (VVDLT). Polar residues predominate over residues 370–397 (TTSGRVESQPVSIVSSLTSTSEPASDSM). 4 disordered regions span residues 370–399 (TTSGRVESQPVSIVSSLTSTSEPASDSMSG), 475–499 (HFPHHHHHHHHSSHPGVPLSPSFRD), 615–649 (PRPLHHQTSSCPHSNSASQPPPPPPPPPPPPMDYV), and 661–680 (PSLTSTHAVPPPPPSHHLSA). Residues 475–487 (HFPHHHHHHHHSS) show a composition bias toward basic residues. The segment covering 620-632 (HQTSSCPHSNSAS) has biased composition (polar residues). A compositionally biased stretch (pro residues) spans 633 to 646 (QPPPPPPPPPPPPM). Residues 872 to 874 (YPH) form a ubiquitin binding region. Zn(2+) contacts are provided by C907 and C910. The RING-type; atypical zinc finger occupies 907 to 948 (CTICLSILEEGEDVRRLPCMHLFHQVCVDQWLITNKKCPICR). Residues 922 to 926 (RLPCM) are ubiquitin binding. Positions 930 and 933 each coordinate Zn(2+).

Belongs to the Arkadia family. In terms of assembly, monomer.

Its subcellular location is the nucleus. The protein resides in the cytoplasm. It is found in the PML body. The enzyme catalyses S-ubiquitinyl-[E2 ubiquitin-conjugating enzyme]-L-cysteine + [acceptor protein]-L-lysine = [E2 ubiquitin-conjugating enzyme]-L-cysteine + N(6)-ubiquitinyl-[acceptor protein]-L-lysine.. The protein operates within protein modification; protein ubiquitination. With respect to regulation, binds free ubiquitin non-covalently via its RING-type zinc finger. Ubiquitin-binding leads to enhance the E3 ubiquitin-protein ligase activity by stabilizing the ubiquitin-conjugating enzyme E2 (donor ubiquitin) in the 'closed' conformation and activating ubiquitin transfer. Its function is as follows. E3 ubiquitin-protein ligase required for mesoderm patterning during embryonic development. Acts as an enhancer of the transcriptional responses of the smad2/smad3 effectors, which are activated downstream of BMP. Acts by mediating ubiquitination and degradation of SMAD inhibitors such as smad7, inducing their proteasomal degradation and thereby enhancing the transcriptional activity of TGF-beta and BMP. Specifically binds polysumoylated chains via SUMO interaction motifs (SIMs) and mediates ubiquitination of sumoylated substrates. The regulation of the BMP-SMAD signaling is however independent of sumoylation and is not dependent of SUMO interaction motifs (SIMs). In Xenopus laevis (African clawed frog), this protein is E3 ubiquitin-protein ligase arkadia-B (rnf111-b).